Here is a 201-residue protein sequence, read N- to C-terminus: Peptidyl-tRNA hydrolase (201 aa).

Position 15 (tyrosine 15) interacts with tRNA. Histidine 20 acts as the Proton acceptor in catalysis. Tyrosine 66, asparagine 68, and asparagine 114 together coordinate tRNA.

This sequence belongs to the PTH family. In terms of assembly, monomer.

It localises to the cytoplasm. It catalyses the reaction an N-acyl-L-alpha-aminoacyl-tRNA + H2O = an N-acyl-L-amino acid + a tRNA + H(+). In terms of biological role, hydrolyzes ribosome-free peptidyl-tRNAs (with 1 or more amino acids incorporated), which drop off the ribosome during protein synthesis, or as a result of ribosome stalling. Functionally, catalyzes the release of premature peptidyl moieties from peptidyl-tRNA molecules trapped in stalled 50S ribosomal subunits, and thus maintains levels of free tRNAs and 50S ribosomes. The sequence is that of Peptidyl-tRNA hydrolase from Burkholderia mallei (strain ATCC 23344).